Reading from the N-terminus, the 264-residue chain is Glutamate racemase (264 aa).

Residues 10 to 11 (DS) and 42 to 43 (YG) each bind substrate. Catalysis depends on Cys73, which acts as the Proton donor/acceptor. 74–75 (NT) is a substrate binding site. Cys183 functions as the Proton donor/acceptor in the catalytic mechanism. Substrate is bound at residue 184–185 (TH).

The protein belongs to the aspartate/glutamate racemases family.

The catalysed reaction is L-glutamate = D-glutamate. Its pathway is cell wall biogenesis; peptidoglycan biosynthesis. In terms of biological role, provides the (R)-glutamate required for cell wall biosynthesis. The chain is Glutamate racemase from Streptococcus pyogenes serotype M4 (strain MGAS10750).